A 1131-amino-acid polypeptide reads, in one-letter code: DNA polymerase II large subunit (1131 aa).

The protein belongs to the archaeal DNA polymerase II family. As to quaternary structure, heterodimer of a large subunit and a small subunit.

It carries out the reaction DNA(n) + a 2'-deoxyribonucleoside 5'-triphosphate = DNA(n+1) + diphosphate. The catalysed reaction is Exonucleolytic cleavage in the 3'- to 5'-direction to yield nucleoside 5'-phosphates.. Possesses two activities: a DNA synthesis (polymerase) and an exonucleolytic activity that degrades single-stranded DNA in the 3'- to 5'-direction. Has a template-primer preference which is characteristic of a replicative DNA polymerase. The sequence is that of DNA polymerase II large subunit from Methanococcus maripaludis (strain DSM 14266 / JCM 13030 / NBRC 101832 / S2 / LL).